Reading from the N-terminus, the 164-residue chain is CASP-like protein 1C1 (164 aa).

Over 1-15 the chain is Cytoplasmic; sequence MGDVEIPPLVKQIVR. Residues 16–36 form a helical membrane-spanning segment; it reads GLRGLAFLATILATSFMAASH. Residues 37–56 are Extracellular-facing; it reads ERAIFPFDYKADYTDLMLFK. The chain crosses the membrane as a helical span at residues 57–77; that stretch reads AFLGANIAASLYSFFFVCLPP. The Cytoplasmic portion of the chain corresponds to 78 to 83; that stretch reads KSLLWR. Residues 84–104 traverse the membrane as a helical segment; that stretch reads LAIVLDVIMFGLLVAMDSAAI. Residues 105–132 are Extracellular-facing; it reads AAAYLHKHGDSQAFWPPICSQVPTYCYR. Residues 133-153 form a helical membrane-spanning segment; sequence VILAISIGFGGVFMFLLIIII. The Cytoplasmic segment spans residues 154-164; the sequence is SISVILNPLLV.

This sequence belongs to the Casparian strip membrane proteins (CASP) family. In terms of assembly, homodimer and heterodimers.

The protein localises to the cell membrane. The chain is CASP-like protein 1C1 from Populus trichocarpa (Western balsam poplar).